The chain runs to 167 residues: Iron-sulfur cluster assembly protein 1 (167 aa).

Residues 1–50 (MMLKQAAKKALGLTSRQSTPWSVGILRTYHENVIDHYDNPRNVGSFDKND) constitute a mitochondrion transit peptide.

This sequence belongs to the NifU family. Component of the core Fe-S cluster (ISC) assembly machinery. Interacts with HSCB. It depends on [2Fe-2S] cluster as a cofactor. Expressed in roots, stems, leaves, flowers, pollen and siliques.

The protein localises to the mitochondrion matrix. The protein resides in the cytoplasm. It is found in the cytosol. Its pathway is cofactor biosynthesis; iron-sulfur cluster biosynthesis. Its function is as follows. Scaffold protein for the de novo synthesis of iron-sulfur (Fe-S) clusters within mitochondria, which is required for maturation of both mitochondrial and cytoplasmic [2Fe-2S] and [4Fe-4S] proteins. First, a [2Fe-2S] cluster is transiently assembled on the scaffold protein ISCU (ISU1, ISU2 or ISU3). In a second step, the cluster is released from ISCU, transferred to a glutaredoxin, followed by the formation of mitochondrial [2Fe-2S] proteins, the synthesis of [4Fe-4S] clusters and their target-specific insertion into the recipient apoproteins. Cluster assembly on ISCU depends on the function of the cysteine desulfurase complex NFS1-ISD11, which serves as the sulfur donor for cluster synthesis, the iron-binding protein frataxin as the putative iron donor, and the electron transfer chain comprised of ferredoxin reductase and ferredoxin, which receive their electrons from NADH. This is Iron-sulfur cluster assembly protein 1 (ISU1) from Arabidopsis thaliana (Mouse-ear cress).